The sequence spans 608 residues: NADH-quinone oxidoreductase subunit C/D (608 aa).

The interval 1-199 is NADH dehydrogenase I subunit C; sequence MSAASSLAPQ…EPFHLSTEKE (199 aa). Residues 223–608 are NADH dehydrogenase I subunit D; it reads DFMFLNLGPN…IDFVMADVDR (386 aa).

In the N-terminal section; belongs to the complex I 30 kDa subunit family. The protein in the C-terminal section; belongs to the complex I 49 kDa subunit family. In terms of assembly, NDH-1 is composed of 13 different subunits. Subunits NuoB, CD, E, F, and G constitute the peripheral sector of the complex.

Its subcellular location is the cell inner membrane. It catalyses the reaction a quinone + NADH + 5 H(+)(in) = a quinol + NAD(+) + 4 H(+)(out). NDH-1 shuttles electrons from NADH, via FMN and iron-sulfur (Fe-S) centers, to quinones in the respiratory chain. The immediate electron acceptor for the enzyme in this species is believed to be ubiquinone. Couples the redox reaction to proton translocation (for every two electrons transferred, four hydrogen ions are translocated across the cytoplasmic membrane), and thus conserves the redox energy in a proton gradient. The polypeptide is NADH-quinone oxidoreductase subunit C/D (Nitrosospira multiformis (strain ATCC 25196 / NCIMB 11849 / C 71)).